Consider the following 288-residue polypeptide: Inorganic pyrophosphatase (288 aa).

Diphosphate is bound at residue Arg80. Mg(2+) is bound by residues Asp117, Asp122, and Asp154. The interval 252-271 (TPSYSDAAAQEIPSASPAPA) is disordered. Residues 258–271 (AAAQEIPSASPAPA) show a composition bias toward low complexity.

It belongs to the PPase family. Mg(2+) serves as cofactor.

Its subcellular location is the cytoplasm. It catalyses the reaction diphosphate + H2O = 2 phosphate + H(+). This Candida albicans (strain SC5314 / ATCC MYA-2876) (Yeast) protein is Inorganic pyrophosphatase (IPP1).